The chain runs to 459 residues: Phosphoglucosamine mutase (459 aa).

The active-site Phosphoserine intermediate is S112. Residues S112, D249, D251, and D253 each contribute to the Mg(2+) site. The residue at position 112 (S112) is a Phosphoserine.

Belongs to the phosphohexose mutase family. Mg(2+) serves as cofactor. Activated by phosphorylation.

It catalyses the reaction alpha-D-glucosamine 1-phosphate = D-glucosamine 6-phosphate. Functionally, catalyzes the conversion of glucosamine-6-phosphate to glucosamine-1-phosphate. The chain is Phosphoglucosamine mutase from Synechococcus sp. (strain RCC307).